The following is a 309-amino-acid chain: Homoserine O-succinyltransferase (309 aa).

The Acyl-thioester intermediate role is filled by Cys-142. The substrate site is built by Lys-163 and Ser-192. The active-site Proton acceptor is His-235. Glu-237 is a catalytic residue. Arg-249 contacts substrate.

The protein belongs to the MetA family.

Its subcellular location is the cytoplasm. It catalyses the reaction L-homoserine + succinyl-CoA = O-succinyl-L-homoserine + CoA. It participates in amino-acid biosynthesis; L-methionine biosynthesis via de novo pathway; O-succinyl-L-homoserine from L-homoserine: step 1/1. Its function is as follows. Transfers a succinyl group from succinyl-CoA to L-homoserine, forming succinyl-L-homoserine. This Yersinia enterocolitica serotype O:8 / biotype 1B (strain NCTC 13174 / 8081) protein is Homoserine O-succinyltransferase.